Here is a 781-residue protein sequence, read N- to C-terminus: Pyrin (781 aa).

The Pyrin domain maps to 1-92 (MAKTPSDHLL…AEELHRAAIQ (92 aa)). Positions 93 to 111 (EYSTQENGTDDSAASSSLG) are enriched in polar residues. The disordered stretch occupies residues 93–226 (EYSTQENGTD…AGGAPGQKEC (134 aa)). Positions 113–126 (NKPRSLKTPDHPEG) are enriched in basic and acidic residues. Basic residues predominate over residues 153–163 (LSRKPLSKRRE). Ser-242 is subject to Phosphoserine. The interval 266–280 (KTAANLDSATEPRAR) is interaction with RELA. Disordered regions lie at residues 270–322 (NLDS…EGDP) and 336–373 (EAVS…QPLP). The B box-type zinc-finger motif lies at 370–412 (QPLPQCKRHLKQVQLLFCEDHDEPICLICSLSQEHQGHRVRPI). Positions 413-442 (EEVALEHKKKIQKQLEHLKKLRKSGEEQRS) form a coiled coil. The Nuclear localization signal signature appears at 420–437 (KKKIQKQLEHLKKLRKSG). The segment at 420–582 (KKKIQKQLEH…YFSETLRSEM (163 aa)) is required for homotrimerization and induction of pyroptosomes. A B30.2/SPRY domain is found at 580-775 (SEMEMFNVPE…NTAPLTICPV (196 aa)).

In terms of assembly, homotrimer. Interacts (via the B box-type zinc finger) with PSTPIP1. Interacts (via the B30.2/SPRY domain) with several components of the inflammasome complex, including CASP1 p20 and p10 subunits, CASP5, PYCARD, NLRP1, NLRP2 and NLRP3, as well as with unprocessed IL1B; this interaction may lead to autophagic degradation of these proteins. Component of the AIM2 PANoptosome complex, a multiprotein complex that drives inflammatory cell death (PANoptosis). Interacts with NFKBIA and RELA. Interacts weakly with VASP and ACTR3. Interacts with active ULK1 (phosphorylated on 'Ser-317') and BECN1 simultaneously. Also interacts with ATG16L1 (via WD repeats), and with ATG8 family members, including GABARAP, GABARAPL1 and, to a lesser extent, GABARAPL2, MAP1LC3A/LC3A and MAP1LC3C/LC3C. Interacts with TRIM21. Interacts with YWHAB, YWHAE, YWHAG, YWHAH, YWHAQ and YWHAZ; the interaction is required for the down-regulation of pyrin pro-inflammatory activity. In terms of processing, cleaved by CASP1. The N-terminal cleavage product localizes to the nucleus as a filamentous network and to the cytoplasm, interacts more strongly with RELA and NFKBIA than the full-length protein, enhances the nuclear localization of RELA and induces NFKBIA proteolysis. The C-terminal cleavage product localizes to the cytoplasm. Phosphorylation at Ser-242 is required for the interaction with 14-3-3 proteins and down-regulation of pyrin pro-inflammatory activity. Post-translationally, degraded along with the delivery of its substrates to autolysosomal compartments (at protein level). Expressed in peripheral blood leukocytes, particularly in mature granulocytes and to a lesser extent in monocytes but not in lymphocytes. Detected in spleen, lung and muscle, probably as a result of leukocyte infiltration in these tissues. Not expressed in thymus, prostate, testis, ovary, small intestine, colon, heart, brain, placenta, liver, kidney, pancreas. Expression detected in several myeloid leukemic, colon cancer, and prostate cancer cell lines.

The protein resides in the cytoplasm. The protein localises to the cytoskeleton. It localises to the cell projection. Its subcellular location is the ruffle. It is found in the lamellipodium. The protein resides in the nucleus. The protein localises to the cytoplasmic vesicle. It localises to the autophagosome. Functionally, involved in the regulation of innate immunity and the inflammatory response in response to IFNG/IFN-gamma. Organizes autophagic machinery by serving as a platform for the assembly of ULK1, Beclin 1/BECN1, ATG16L1, and ATG8 family members and recognizes specific autophagy targets, thus coordinating target recognition with assembly of the autophagic apparatus and initiation of autophagy. Acts as an autophagy receptor for the degradation of several inflammasome components, including CASP1, NLRP1 and NLRP3, hence preventing excessive IL1B- and IL18-mediated inflammation. However, it can also have a positive effect in the inflammatory pathway, acting as an innate immune sensor that triggers PYCARD/ASC specks formation, caspase-1 activation, and IL1B and IL18 production. Together with AIM2, also acts as a mediator of pyroptosis, necroptosis and apoptosis (PANoptosis), an integral part of host defense against pathogens, in response to bacterial infection. It is required for PSTPIP1-induced PYCARD/ASC oligomerization and inflammasome formation. Recruits PSTPIP1 to inflammasomes, and is required for PSTPIP1 oligomerization. The sequence is that of Pyrin from Homo sapiens (Human).